A 354-amino-acid chain; its full sequence is Uroporphyrinogen decarboxylase (354 aa).

Residues 27-31 (RQAGR), Asp77, Tyr154, Ser209, and His327 each bind substrate.

The protein belongs to the uroporphyrinogen decarboxylase family. As to quaternary structure, homodimer.

The protein resides in the cytoplasm. It catalyses the reaction uroporphyrinogen III + 4 H(+) = coproporphyrinogen III + 4 CO2. It functions in the pathway porphyrin-containing compound metabolism; protoporphyrin-IX biosynthesis; coproporphyrinogen-III from 5-aminolevulinate: step 4/4. Functionally, catalyzes the decarboxylation of four acetate groups of uroporphyrinogen-III to yield coproporphyrinogen-III. This is Uroporphyrinogen decarboxylase from Shewanella frigidimarina (strain NCIMB 400).